The primary structure comprises 515 residues: tRNA pseudouridine synthase Pus10 (515 aa).

Positions 21 and 24 each coordinate Zn(2+). Residues 42 to 85 (KEVTYELQKYLSHGDPAEENDTPPSKKAKIEEDTSSNEHLGNCE) are a coiled coil. The disordered stretch occupies residues 55–82 (GDPAEENDTPPSKKAKIEEDTSSNEHLG). Zn(2+) contacts are provided by Cys96 and Cys99. Residues 291-304 (TPWIIDGERKIESS) are RNA binding forefinger loop. Asp331 (nucleophile) is an active-site residue. An RNA binding thumb loop region spans residues 428–443 (QKTPLRVLHRRPLASR).

It belongs to the pseudouridine synthase Pus10 family.

It is found in the nucleus. It localises to the cytoplasm. The protein localises to the mitochondrion. The enzyme catalyses uridine(55) in tRNA = pseudouridine(55) in tRNA. It carries out the reaction uridine(54) in tRNA = pseudouridine(54) in tRNA. Functionally, protein with different functions depending on its subcellular location: involved in miRNA processing in the nucleus and acts as a tRNA pseudouridylate synthase in the cytoplasm. In the cytoplasm, acts as a pseudouridylate synthase by catalyzing synthesis of pseudouridine(54) and pseudouridine(55) from uracil-54 and uracil-55, respectively, in the psi GC loop of a subset of tRNAs. tRNA pseudouridylate synthase activity is enhanced by the presence of 1-methyladenosine at position 53-61 of tRNAs. Does not show tRNA pseudouridylate synthase activity in the nucleus. In the nucleus, promotes primary microRNAs (pri-miRNAs) processing independently of its RNA pseudouridylate synthase activity. Binds pri-miRNAs. This Xenopus laevis (African clawed frog) protein is tRNA pseudouridine synthase Pus10.